We begin with the raw amino-acid sequence, 355 residues long: uncharacterized protein (355 aa).

This sequence belongs to the ycf89 family.

The protein resides in the plastid. It localises to the chloroplast. This is an uncharacterized protein from Trieres chinensis (Marine centric diatom).